A 561-amino-acid chain; its full sequence is Cloacin (561 aa).

3 stretches are compositionally biased toward gly residues: residues 1–21 (MSGGDGRGPGNSGLGHNGGQA), 29–40 (SGKGGPSSGGGT), and 66–91 (FGNGGSKPGGNGGNSGNHSGSSGGGQ). 5 disordered regions span residues 1-93 (MSGG…GQSS), 254-273 (PKGIVAEKGDSRPAGFTAGG), 304-326 (VKQRQEEEKRRQQAWDAAHPEEG), 432-507 (KAAL…KRAR), and 530-561 (RASDGEHLGAFDPKTGKQVKGPDPKRNIKKYL). The tract at residues 1-180 (MSGGDGRGPG…DTVTETPAST (180 aa)) is involved in the translocation of the protein across the cell membrane. The interval 200 to 420 (DERQHIAVVA…NAKLKAAQAS (221 aa)) is responsible for the receptor binding activity. Basic and acidic residues-rich tracts occupy residues 306–326 (QRQEEEKRRQQAWDAAHPEEG) and 440–494 (ESRK…EGKP). Positions 421–561 (LNAMNDALSR…DPKRNIKKYL (141 aa)) are ribonuclease activity. Positions 540-561 (FDPKTGKQVKGPDPKRNIKKYL) are binding of immunity protein.

This sequence belongs to the cloacin colicin family.

Its function is as follows. Inactivates ribosomes by hydrolyzing 16S RNA in 30S ribosomes at a specific site. In terms of biological role, colicins are polypeptide toxins produced by and active against E.coli and closely related bacteria. This is Cloacin (ccl) from Escherichia coli.